Reading from the N-terminus, the 1027-residue chain is Exportin-T (1027 aa).

It belongs to the exportin family.

It is found in the nucleus. The protein resides in the cytoplasm. TRNA nucleus export receptor which facilitates tRNA translocation across the nuclear pore complex. Involved in pre-tRNA splicing, probably by affecting the interaction of pre-tRNA with splicing endonuclease. This Pyricularia oryzae (strain 70-15 / ATCC MYA-4617 / FGSC 8958) (Rice blast fungus) protein is Exportin-T (LOS1).